A 1114-amino-acid polypeptide reads, in one-letter code: MLSCLKEEMPPQELTRRLATVITHVDEIMQQEVRPLMAVEIIEQLHRQFAILSGGRGEDGAPIITFPEFSGFKHIPDEDFLNVMTYLTSIPSVEAASIGFIVVIDRRRDKWSSVKASLTRIAVAFPGNLQLIFILRPSRFIQRTFTDIGIKYYRNEFKTKVPIIMVNSVSDLHGYIDKSQLTRELGGTLEYRHGQWVNHRTAIENFALTLKTTAQMLQTFGSCLATAELPRSMLSTEDLLMSHTRQRDKLQDELKLLGKQGTTLLSCIQEPATKCPNSKLNLNQLENVTTMERLLVQLDETEKAFSHFWSEHHLKLNQCLQLQHFEHDFCKAKLALDNLLEEQAEFTGIGDSVMHVEQILKEHKKLEEKSQEPLEKAQLLALVGDQLIQSHHYAADAIRPRCVELRHLCDDFINGNKKKWDILGKSLEFHRQLDKVSQWCEAGIYLLASQAVDKCQSREGVDIALNDIATFLGTVKEYPLLSPKEFYNEFELLLTLDAKAKAQKVLQRLDDVQEIFHKRQVSLMKLAAKQTRPVQPVAPHPESSPKWVSSKTSQPSTSVPLARPLRTSEEPYTETELNSRGKEDDETKFEVKSEEIFESHHERGNPELEQQARLGDLSPRRRIIRDLLETEEIYIKEIKSIIDGYITPMDFIWLKHLIPDVLQNNKDFLFGNIRELYEFHNRTFLKELEKCAENPELLAHCFLKRKEDLQIYFKYHKNLPRARAIWQECQDCAYFGVCQRQLDHNLPLFKYLKGPSQRLIKYQMLLKGLLDFESPEDMEIDPGELGGSAKDGPKRTKDSAFSTELQQALAVIEDLIKSCELAVDLAAVTECPDDIGKLGKLLLHGPFSVWTIHKDRYKMKDLIRFKPSQRQIYLFERGIVFCKIRMEPGDQGLSPHYSFKKTMKLMTLSIRQLGRGSHRKFEIASRNGLEKYILQAASKEIRDCWFSEISKLLMEQQNNIKDQGNPQFEMSTSKGSGAGSGPWIKNMERATTSKEDPASSTGGIKGCSSREFSSMDTFEDCEGAEDMEKESSALSLAGLFQSDDSHETCSSKSAFLERGESSQGEKEERDEEETATRSTEEERAGASTGRLAPAGATAGFQARALRPRTSAQES.

A CRAL-TRIO domain is found at 11-193; sequence PQELTRRLAT…ELGGTLEYRH (183 aa). The stretch at 323–428 is one Spectrin repeat; the sequence is QHFEHDFCKA…KWDILGKSLE (106 aa). The interval 530–614 is disordered; that stretch reads QTRPVQPVAP…NPELEQQARL (85 aa). Residues 546–559 show a composition bias toward polar residues; it reads KWVSSKTSQPSTSV. A compositionally biased stretch (basic and acidic residues) spans 577–606; it reads LNSRGKEDDETKFEVKSEEIFESHHERGNP. Residues 619-822 form the DH domain; it reads PRRRIIRDLL…EDLIKSCELA (204 aa). The PH domain occupies 834–954; sequence DIGKLGKLLL…WFSEISKLLM (121 aa). Residues 962–975 are compositionally biased toward polar residues; sequence DQGNPQFEMSTSKG. The disordered stretch occupies residues 962–1114; that stretch reads DQGNPQFEMS…LRPRTSAQES (153 aa). Residues 986–997 are compositionally biased toward basic and acidic residues; that stretch reads NMERATTSKEDP. Over residues 1017–1028 the composition is skewed to acidic residues; sequence TFEDCEGAEDME. 2 stretches are compositionally biased toward basic and acidic residues: residues 1043-1067 and 1074-1084; these read DDSH…GEKE and TATRSTEEERA.

Belongs to the MCF2 family. In terms of tissue distribution, significantly expressed in brain and modestly in pancreas, brain and testis.

In terms of biological role, probably functions as a guanine nucleotide exchange factor. The protein is Probable guanine nucleotide exchange factor MCF2L2 (MCF2L2) of Homo sapiens (Human).